Consider the following 67-residue polypeptide: Small ribosomal subunit protein eS27 (67 aa).

4 residues coordinate Zn(2+): cysteine 22, cysteine 25, cysteine 41, and cysteine 44. The segment at 22–44 (CPDCGNEQVTFSHAAMVVRCLVC) adopts a C4-type zinc-finger fold.

Belongs to the eukaryotic ribosomal protein eS27 family. Part of the 30S ribosomal subunit. The cofactor is Zn(2+).

The sequence is that of Small ribosomal subunit protein eS27 from Pyrobaculum neutrophilum (strain DSM 2338 / JCM 9278 / NBRC 100436 / V24Sta) (Thermoproteus neutrophilus).